The sequence spans 202 residues: GTP-binding protein rho1 (202 aa).

13–20 provides a ligand contact to GTP; that stretch reads GDGACGKT. The Effector region signature appears at 35-43; the sequence is YVPTVFENY. GTP is bound by residues 60–64 and 118–121; these read DTAGQ and CKAD. Cysteine 199 is modified (cysteine methyl ester). The S-geranylgeranyl cysteine moiety is linked to residue cysteine 199. The propeptide at 200-202 is removed in mature form; it reads ILL.

This sequence belongs to the small GTPase superfamily. Rho family.

It is found in the cell membrane. Functionally, involved in the regulation of cell wall growth and actin cytoskeleton organization. Activates (1,3)-beta-D-glucan synthase. The chain is GTP-binding protein rho1 (rho1) from Schizosaccharomyces pombe (strain 972 / ATCC 24843) (Fission yeast).